The chain runs to 192 residues: Charged multivesicular body protein 1 (192 aa).

Coiled coils occupy residues 7–35 (QLKF…KLKK) and 102–125 (NMDL…LDVQ). The interval 164-192 (QMGSAPSEKVQQGETDELTERLNRLKQKN) is disordered.

This sequence belongs to the SNF7 family. In terms of assembly, probable peripherally associated component of the endosomal sorting required for transport complex III (ESCRT-III).

It localises to the endosome membrane. Its function is as follows. Probable peripherally associated component of the endosomal sorting required for transport complex III (ESCRT-III) which is involved in multivesicular bodies (MVBs) formation and sorting of endosomal cargo proteins into MVBs. MVBs contain intraluminal vesicles (ILVs) that are generated by invagination and scission from the limiting membrane of the endosome and are delivered to lysosomes enabling degradation of membrane proteins. The polypeptide is Charged multivesicular body protein 1 (chmp1) (Dictyostelium discoideum (Social amoeba)).